Consider the following 252-residue polypeptide: Low-density lipoprotein receptor-related protein 5-like protein (252 aa).

LDL-receptor class B repeat units follow at residues 3 to 45, 46 to 88, 89 to 132, 133 to 175, and 176 to 218; these read GHVY…NWVA, RSLY…HPEM, GLTY…DLQE, GKLY…LGDF, and IYWT…DKVV. The tract at residues 223 to 247 is disordered; sequence HADRNGGAATCASSRPTQPGLAAPS.

This chain is Low-density lipoprotein receptor-related protein 5-like protein (LRP5L), found in Homo sapiens (Human).